The chain runs to 406 residues: Peptidase T (406 aa).

Zn(2+) is bound at residue H77. D79 is a catalytic residue. D139 provides a ligand contact to Zn(2+). E173 serves as the catalytic Proton acceptor. E174, D196, and H377 together coordinate Zn(2+).

Belongs to the peptidase M20B family. Zn(2+) serves as cofactor.

It localises to the cytoplasm. It catalyses the reaction Release of the N-terminal residue from a tripeptide.. Its function is as follows. Cleaves the N-terminal amino acid of tripeptides. The sequence is that of Peptidase T from Parabacteroides distasonis (strain ATCC 8503 / DSM 20701 / CIP 104284 / JCM 5825 / NCTC 11152).